The following is a 223-amino-acid chain: Sporulation-specific protein 19 (223 aa).

An N-terminal signal peptide occupies residues 1–20; the sequence is MKKQILIVAAQSILCSTVFG. A lipid anchor (GPI-anchor amidated asparagine) is attached at asparagine 198. The propeptide at 199–223 is removed in mature form; it reads ASNFLTPTTVALAVLLTILLFIQAY.

The GPI-anchor is attached to the protein in the endoplasmic reticulum and serves to target the protein to the cell surface. There, the glucosamine-inositol phospholipid moiety is cleaved off and the GPI-modified mannoprotein is covalently attached via its lipidless GPI glycan remnant to the 1,6-beta-glucan of the outer cell wall layer.

It localises to the secreted. The protein localises to the cell wall. It is found in the membrane. Involved in sporulation. Essential for completion of the nuclear division. This Saccharomyces cerevisiae (strain ATCC 204508 / S288c) (Baker's yeast) protein is Sporulation-specific protein 19 (SPO19).